The sequence spans 456 residues: Tyrosinase-like protein (456 aa).

The first 22 residues, 1-22 (MNTMTLLGKVFLLQFLIGVGFC), serve as a signal peptide directing secretion. Cu cation contacts are provided by H145, H154, H163, H295, H299, and H322.

This sequence belongs to the tyrosinase family. Cu(2+) is required as a cofactor. Prismatic layer of shell (at protein level).

It is found in the secreted. The chain is Tyrosinase-like protein from Pinctada maxima (Silver-lipped pearl oyster).